The chain runs to 310 residues: Proline iminopeptidase (310 aa).

In terms of domain architecture, AB hydrolase-1 spans proline 33–phenylalanine 290. Residue serine 107 is the Nucleophile of the active site. Residue aspartate 260 is part of the active site. The active-site Proton donor is histidine 287.

Belongs to the peptidase S33 family.

The protein resides in the cytoplasm. It carries out the reaction Release of N-terminal proline from a peptide.. Functionally, specifically catalyzes the removal of N-terminal proline residues from peptides. The protein is Proline iminopeptidase (pip) of Neisseria meningitidis serogroup A / serotype 4A (strain DSM 15465 / Z2491).